A 442-amino-acid polypeptide reads, in one-letter code: ATP-dependent protease ATPase subunit HslU (442 aa).

Residues isoleucine 18, 60–65, aspartate 255, glutamate 320, and arginine 392 contribute to the ATP site; that span reads GVGKTE.

It belongs to the ClpX chaperone family. HslU subfamily. In terms of assembly, a double ring-shaped homohexamer of HslV is capped on each side by a ring-shaped HslU homohexamer. The assembly of the HslU/HslV complex is dependent on binding of ATP.

The protein resides in the cytoplasm. Its function is as follows. ATPase subunit of a proteasome-like degradation complex; this subunit has chaperone activity. The binding of ATP and its subsequent hydrolysis by HslU are essential for unfolding of protein substrates subsequently hydrolyzed by HslV. HslU recognizes the N-terminal part of its protein substrates and unfolds these before they are guided to HslV for hydrolysis. The chain is ATP-dependent protease ATPase subunit HslU from Aeromonas hydrophila subsp. hydrophila (strain ATCC 7966 / DSM 30187 / BCRC 13018 / CCUG 14551 / JCM 1027 / KCTC 2358 / NCIMB 9240 / NCTC 8049).